The following is an 865-amino-acid chain: Envelope glycoprotein gp160 (865 aa).

An N-terminal signal peptide occupies residues 1-20 (MRYTIITLGIIVIGIGIVLS). The Extracellular portion of the chain corresponds to 21–705 (KQWITVFYGI…SKWLNILKMG (685 aa)). Asn-35 carries an N-linked (GlcNAc...) asparagine; by host glycan. Cys-42 and Cys-55 are joined by a disulfide. N-linked (GlcNAc...) asparagine; by host glycans are attached at residues Asn-68, Asn-117, Asn-150, Asn-165, Asn-195, Asn-198, Asn-210, Asn-252, Asn-255, Asn-266, Asn-276, Asn-282, Asn-294, Asn-306, Asn-316, Asn-373, Asn-414, Asn-451, Asn-488, and Asn-491. 5 cysteine pairs are disulfide-bonded: Cys-101–Cys-218, Cys-108–Cys-209, Cys-113–Cys-166, Cys-231–Cys-261, and Cys-241–Cys-253. Residues 113–165 (CVELNSTRERATTPTTTPKSTGLPCVGPTSGENLQSCNASIIEREMEDEPASN) form a V1 region. The tract at residues 166–209 (CTFAMAGYVRDQKKNYYSVVWNDAEIYCKNKTNSTSKECYMIHC) is V2. The segment at 311–343 (CRRPGNKTVLPVTIMAGLVFHSQKYNMKLRQAW) is V3. The cysteines at positions 311 and 344 are disulfide-linked. An intrachain disulfide couples Cys-396 to Cys-471. Residues 403–444 (CKMDWFLNYLNNKTWDAYHNFCSSKKKGHAPGPCVQRTYVAY) are V4. The V5 stretch occupies residues 487–494 (KNRTNVTL). Residues 537–557 (VPFVLGFLGFLGAAGTAMGAA) are fusion peptide. Residues 600–616 (LNARVTALEKYLEDQAR) form an immunosuppression region. N-linked (GlcNAc...) asparagine; by host glycosylation is found at Asn-645 and Asn-661. Positions 650–675 (EWERQIADLESNITGQLVKAREQEEK) form a coiled coil. Residues 682-703 (KLTSWSDFWSWFDFSKWLNILK) are MPER; binding to GalCer. The helical transmembrane segment at 706 to 726 (FLVIVGIIGLRLLYTVYGCIV) threads the bilayer. The Cytoplasmic segment spans residues 727 to 865 (RVRQGYVPLS…VRQGLEEILN (139 aa)). The YXXL motif; contains endocytosis signal signature appears at 732-735 (YVPL). Residues 744-763 (VGKGRPDNADEPGEGGDNSR) are disordered.

The mature envelope protein (Env) consists of a homotrimer of non-covalently associated gp120-gp41 heterodimers. The resulting complex protrudes from the virus surface as a spike. Interacts with host CD4 and CCR5. Gp120 also interacts with the C-type lectins CD209/DC-SIGN and CLEC4M/DC-SIGNR (collectively referred to as DC-SIGN(R)). In terms of assembly, the mature envelope protein (Env) consists of a homotrimer of non-covalently associated gp120-gp41 heterodimers. The resulting complex protrudes from the virus surface as a spike. Post-translationally, specific enzymatic cleavages in vivo yield mature proteins. Envelope glycoproteins are synthesized as an inactive precursor that is heavily N-glycosylated and processed likely by host cell furin in the Golgi to yield the mature SU and TM proteins. The cleavage site between SU and TM requires the minimal sequence [KR]-X-[KR]-R.

It is found in the virion membrane. It localises to the host cell membrane. Its subcellular location is the host endosome membrane. The surface protein gp120 (SU) attaches the virus to the host lymphoid cell by binding to the primary receptor CD4. This interaction induces a structural rearrangement creating a high affinity binding site for a chemokine coreceptor like CCR5. This peculiar 2 stage receptor-interaction strategy allows gp120 to maintain the highly conserved coreceptor-binding site in a cryptic conformation, protected from neutralizing antibodies. These changes are transmitted to the transmembrane protein gp41 and are thought to activate its fusogenic potential by unmasking its fusion peptide. In terms of biological role, surface protein gp120 (SU) may target the virus to gut-associated lymphoid tissue (GALT) by binding host ITGA4/ITGB7 (alpha-4/beta-7 integrins), a complex that mediates T-cell migration to the GALT. Interaction between gp120 and ITGA4/ITGB7 would allow the virus to enter GALT early in the infection, infecting and killing most of GALT's resting CD4+ T-cells. This T-cell depletion is believed to be the major insult to the host immune system leading to AIDS. Its function is as follows. The surface protein gp120 is a ligand for CD209/DC-SIGN and CLEC4M/DC-SIGNR, which are respectively found on dendritic cells (DCs), and on endothelial cells of liver sinusoids and lymph node sinuses. These interactions allow capture of viral particles at mucosal surfaces by these cells and subsequent transmission to permissive cells. DCs are professional antigen presenting cells, critical for host immunity by inducing specific immune responses against a broad variety of pathogens. They act as sentinels in various tissues where they take up antigen, process it, and present it to T-cells following migration to lymphoid organs. SIV subverts the migration properties of dendritic cells to gain access to CD4+ T-cells in lymph nodes. Virus transmission to permissive T-cells occurs either in trans (without DCs infection, through viral capture and transmission), or in cis (following DCs productive infection, through the usual CD4-gp120 interaction), thereby inducing a robust infection. In trans infection, bound virions remain infectious over days and it is proposed that they are not degraded, but protected in non-lysosomal acidic organelles within the DCs close to the cell membrane thus contributing to the viral infectious potential during DCs' migration from the periphery to the lymphoid tissues. On arrival at lymphoid tissues, intact virions recycle back to DCs' cell surface allowing virus transmission to CD4+ T-cells. Virion capture also seems to lead to MHC-II-restricted viral antigen presentation, and probably to the activation of SIV-specific CD4+ cells. Functionally, the transmembrane protein gp41 (TM) acts as a class I viral fusion protein. Under the current model, the protein has at least 3 conformational states: pre-fusion native state, pre-hairpin intermediate state, and post-fusion hairpin state. During fusion of viral and target intracellular membranes, the coiled coil regions (heptad repeats) assume a trimer-of-hairpins structure, positioning the fusion peptide in close proximity to the C-terminal region of the ectodomain. The formation of this structure appears to drive apposition and subsequent fusion of viral and target cell membranes. Complete fusion occurs in host cell endosomes. The virus undergoes clathrin-dependent internalization long before endosomal fusion, thus minimizing the surface exposure of conserved viral epitopes during fusion and reducing the efficacy of inhibitors targeting these epitopes. Membranes fusion leads to delivery of the nucleocapsid into the cytoplasm. The envelope glycoprotein gp160 precursor down-modulates cell surface CD4 antigen by interacting with it in the endoplasmic reticulum and blocking its transport to the cell surface. In terms of biological role, the gp120-gp41 heterodimer allows rapid transcytosis of the virus through CD4 negative cells such as simple epithelial monolayers of the intestinal, rectal and endocervical epithelial barriers. Both gp120 and gp41 specifically recognize glycosphingolipids galactosyl-ceramide (GalCer) or 3' sulfo-galactosyl-ceramide (GalS) present in the lipid rafts structures of epithelial cells. Binding to these alternative receptors allows the rapid transcytosis of the virus through the epithelial cells. This transcytotic vesicle-mediated transport of virions from the apical side to the basolateral side of the epithelial cells does not involve infection of the cells themselves. This chain is Envelope glycoprotein gp160 (env), found in Simian immunodeficiency virus agm.vervet (isolate AGM TYO-1) (SIV-agm.ver).